Reading from the N-terminus, the 396-residue chain is uncharacterized protein (396 aa).

12 helical membrane-spanning segments follow: residues 12–32 (LLAL…SVGL), 48–68 (GLTV…LTSL), 78–98 (LLWI…ASSI), 106–126 (VISA…AADI), 138–158 (IMFT…TFIG), 165–185 (FAFM…GILV), 209–229 (LLLL…VFTY), 242–262 (AGTV…GNMI), 271–291 (PIAA…VLTF), 297–317 (AAGL…VPGL), 338–358 (AMNI…GGVI), and 362–382 (IGLI…VILT).

The protein belongs to the major facilitator superfamily.

The protein localises to the cell membrane. This is an uncharacterized protein from Bacillus subtilis (strain 168).